The sequence spans 605 residues: Threonine--tRNA ligase (605 aa).

The tract at residues 195–497 (DHRKVGKELG…LIEEYAGDFP (303 aa)) is catalytic. Zn(2+)-binding residues include cysteine 294, histidine 345, and histidine 474.

The protein belongs to the class-II aminoacyl-tRNA synthetase family. In terms of assembly, homodimer. It depends on Zn(2+) as a cofactor.

It is found in the cytoplasm. It carries out the reaction tRNA(Thr) + L-threonine + ATP = L-threonyl-tRNA(Thr) + AMP + diphosphate + H(+). In terms of biological role, catalyzes the attachment of threonine to tRNA(Thr) in a two-step reaction: L-threonine is first activated by ATP to form Thr-AMP and then transferred to the acceptor end of tRNA(Thr). Also edits incorrectly charged L-seryl-tRNA(Thr). The protein is Threonine--tRNA ligase of Thermosynechococcus vestitus (strain NIES-2133 / IAM M-273 / BP-1).